A 318-amino-acid polypeptide reads, in one-letter code: Taste receptor type 2 member 117 (318 aa).

At 1–16 the chain is on the extracellular side; sequence MQHNLKTIFVISHSTL. A helical transmembrane segment spans residues 17-37; it reads TIILFTELVTGIIGNGFMALV. Over 38 to 53 the chain is Cytoplasmic; the sequence is HCMDWLRRKKISLVNQ. The helical transmembrane segment at 54-74 threads the bilayer; it reads ILTALAISRIFQLCLLFISLV. Residues 75–93 lie on the Extracellular side of the membrane; sequence ISFSYPDLTTTSLIKVTCN. A helical membrane pass occupies residues 94–114; the sequence is LWIIVNHFNIWLATCLGIFYF. Over 115–134 the chain is Cytoplasmic; that stretch reads LKISNFSNSLFLYLKWRVEK. The helical transmembrane segment at 135–155 threads the bilayer; sequence VVLVTLLVSLVLLTLNSLLIN. Topologically, residues 156-189 are extracellular; that stretch reads LEINICINEYQRNITYSFNSYYHANCHRQMLSLH. Residue asparagine 168 is glycosylated (N-linked (GlcNAc...) asparagine). Residues 190-210 traverse the membrane as a helical segment; sequence IIFLSVPFVLSLSTFLLLIFS. Topologically, residues 211–238 are cytoplasmic; that stretch reads LGTHHKKMQQHVQGRRDASTMAHFKALQ. A helical membrane pass occupies residues 239 to 259; sequence TVIAFLLLYSIFILSVLVQIW. At 260–268 the chain is on the extracellular side; that stretch reads KYELLKKNL. A helical membrane pass occupies residues 269 to 289; sequence FILFCQVAYVAFPSFHSYILI. Residues 290–318 are Cytoplasmic-facing; that stretch reads LGDMKMRQACLSVLWWQKFRKNYVEPLDL.

It belongs to the G-protein coupled receptor T2R family.

Its subcellular location is the membrane. Its function is as follows. Putative taste receptor which may play a role in the perception of bitterness. This is Taste receptor type 2 member 117 from Rattus norvegicus (Rat).